The following is a 271-amino-acid chain: Interleukin-1 alpha (271 aa).

A propeptide spanning residues 1–112 is cleaved from the precursor; that stretch reads MAKVPDMFED…DSEEEIIKPR (112 aa). At K82 the chain carries N6-acetyllysine. The interval 82-86 is nuclear localization signal (NLS); the sequence is KKRRL. Position 87 is a phosphoserine (S87). 4 N-linked (GlcNAc...) asparagine glycosylation sites follow: N102, N121, N137, and N141.

Belongs to the IL-1 family. In terms of assembly, monomer. Interacts with TMED10; the interaction mediates the translocation from the cytoplasm into the ERGIC (endoplasmic reticulum-Golgi intermediate compartment) and thereby secretion. Interacts with IL1R1. Interacts with S100A13; this interaction is the first step in the export of IL1A, followed by direct translocation of this complex across the plasma membrane. In terms of processing, acetylated within its nuclear localization sequence, which impacts subcellular localization. Proteolytic processed by CAPN1 in a calcium-dependent manner. Cleavage from 31 kDa precursor to 18 kDa biologically active molecules. Post-translationally, phosphorylated. Phosphorylation greatly enhances susceptibility to digestion and promotes the conversion of pre-IL1A alpha to the biologically active IL1A.

It localises to the nucleus. The protein resides in the cytoplasm. It is found in the secreted. In terms of biological role, cytokine constitutively present intracellularly in nearly all resting non-hematopoietic cells that plays an important role in inflammation and bridges the innate and adaptive immune systems. After binding to its receptor IL1R1 together with its accessory protein IL1RAP, forms the high affinity interleukin-1 receptor complex. Signaling involves the recruitment of adapter molecules such as MYD88, IRAK1 or IRAK4. In turn, mediates the activation of NF-kappa-B and the three MAPK pathways p38, p42/p44 and JNK pathways. Within the cell, acts as an alarmin and cell death results in its liberation in the extracellular space after disruption of the cell membrane to induce inflammation and alert the host to injury or damage. In addition to its role as a danger signal, which occurs when the cytokine is passively released by cell necrosis, directly senses DNA damage and acts as signal for genotoxic stress without loss of cell integrity. The protein is Interleukin-1 alpha (IL1A) of Macaca fascicularis (Crab-eating macaque).